The sequence spans 127 residues: Modulator protein MzrA (127 aa).

At 1–10 (MLKPRITARQ) the chain is on the cytoplasmic side. Residues 11–31 (LIWISAFLLMLTILMMTWSTL) form a helical membrane-spanning segment. The Periplasmic portion of the chain corresponds to 32 to 127 (RQQESTLAIR…RLRESSHRFG (96 aa)).

The protein belongs to the MzrA family. Interacts with EnvZ.

It is found in the cell inner membrane. In terms of biological role, modulates the activity of the EnvZ/OmpR two-component regulatory system, probably by directly modulating EnvZ enzymatic activity and increasing stability of phosphorylated OmpR. The protein is Modulator protein MzrA of Salmonella agona (strain SL483).